Here is a 278-residue protein sequence, read N- to C-terminus: Transmembrane protein 41A-B (278 aa).

Positions 1–23 (MRSIWGLIVLVAAATFYLYLLSA) are cleaved as a signal peptide. Transmembrane regions (helical) follow at residues 78–98 (GYVF…AIPG), 101–121 (FLNM…IACT), 164–184 (LFFF…FLNV), 191–211 (IPIP…NFIC), and 230–250 (WFTL…GALI).

The protein belongs to the TMEM41 family.

The protein localises to the membrane. This Danio rerio (Zebrafish) protein is Transmembrane protein 41A-B.